The following is a 180-amino-acid chain: Large ribosomal subunit protein uL5 (180 aa).

The protein belongs to the universal ribosomal protein uL5 family. As to quaternary structure, part of the 50S ribosomal subunit; part of the 5S rRNA/L5/L18/L25 subcomplex. Contacts the 5S rRNA and the P site tRNA. Forms a bridge to the 30S subunit in the 70S ribosome.

Functionally, this is one of the proteins that bind and probably mediate the attachment of the 5S RNA into the large ribosomal subunit, where it forms part of the central protuberance. In the 70S ribosome it contacts protein S13 of the 30S subunit (bridge B1b), connecting the 2 subunits; this bridge is implicated in subunit movement. Contacts the P site tRNA; the 5S rRNA and some of its associated proteins might help stabilize positioning of ribosome-bound tRNAs. The protein is Large ribosomal subunit protein uL5 of Leuconostoc mesenteroides subsp. mesenteroides (strain ATCC 8293 / DSM 20343 / BCRC 11652 / CCM 1803 / JCM 6124 / NCDO 523 / NBRC 100496 / NCIMB 8023 / NCTC 12954 / NRRL B-1118 / 37Y).